The primary structure comprises 748 residues: Transcription factor FBD3 (748 aa).

The segment covering 1–10 has biased composition (basic and acidic residues); it reads MPEQPRRPSD. The tract at residues 1–26 is disordered; it reads MPEQPRRPSDQEQNQSETGPPTNKRR. Over residues 11 to 21 the composition is skewed to polar residues; sequence QEQNQSETGPP. Residues 32–59 constitute a DNA-binding region (zn(2)-C6 fungal-type); sequence CNACRSRKSRCDGQRPSCSSCLSLGFDC. Disordered stretches follow at residues 116–160 and 417–438; these read GTIN…EGIP and IPDE…TSGN. Over residues 131–141 the composition is skewed to low complexity; that stretch reads APTKASAPSGA. The segment covering 429–438 has biased composition (polar residues); the sequence is SGRSPATSGN.

Its subcellular location is the nucleus. Transcription factor; part of the Fusarium detoxification of benzoxazolinone cluster 2 (FDB2) involved in the degradation of benzoxazolinones produced by the host plant. Maize, wheat, and rye produce the 2 benzoxazinone phytoanticipins 2,4-dihy-droxy-7-methoxy-1,4-benzoxazin-3-one (DIMBOA) and 2,4-dihydroxy-1,4-benzoxazin-3-one (DIBOA) that, due to their inherent instability once released, spontaneously degrade to the more stable corresponding benzoxazolinones, 6-methoxy-2-benzoxazolinone (MBOA) and 2-benzoxazolinone (BOA), respectively. FDB3 is not essentiel, but contributes to efficient BOA biotransformation. This Gibberella moniliformis (strain M3125 / FGSC 7600) (Maize ear and stalk rot fungus) protein is Transcription factor FBD3.